The following is a 65-amino-acid chain: Large ribosomal subunit protein bL35 (65 aa).

It belongs to the bacterial ribosomal protein bL35 family.

The polypeptide is Large ribosomal subunit protein bL35 (Porphyromonas gingivalis (strain ATCC 33277 / DSM 20709 / CIP 103683 / JCM 12257 / NCTC 11834 / 2561)).